Here is a 253-residue protein sequence, read N- to C-terminus: Ubiquinone biosynthesis O-methyltransferase (253 aa).

Residues arginine 47, glycine 78, aspartate 99, and methionine 141 each coordinate S-adenosyl-L-methionine.

The protein belongs to the methyltransferase superfamily. UbiG/COQ3 family.

It carries out the reaction a 3-demethylubiquinol + S-adenosyl-L-methionine = a ubiquinol + S-adenosyl-L-homocysteine + H(+). It catalyses the reaction a 3-(all-trans-polyprenyl)benzene-1,2-diol + S-adenosyl-L-methionine = a 2-methoxy-6-(all-trans-polyprenyl)phenol + S-adenosyl-L-homocysteine + H(+). It participates in cofactor biosynthesis; ubiquinone biosynthesis. In terms of biological role, O-methyltransferase that catalyzes the 2 O-methylation steps in the ubiquinone biosynthetic pathway. The polypeptide is Ubiquinone biosynthesis O-methyltransferase (Rhodopseudomonas palustris (strain BisB5)).